Consider the following 473-residue polypeptide: MSRVHAFVDDALGDLDAVALADAIRSGRVGRADVVEAAIARAEAVNPALNALAYAAFDVARDAAAMGTGQEAFFSGVPTFIKDNVDVAGQPSMHGTDAWEPYAAVADSEITRVVLGTGLVSLGKTQLSEFGFSAVAEHPRLGPVRNPWNTDYTAGASSSGSGALVAAGVVPIAHANDGGGSIRIPAACNGLVGLKPSRGRLPLEPEYRRLPVGIVANGVLTRTVRDTAAFYREAERLWRNHQLPPVGDVTSPVKQRLRIAVVTRSVLREASPEVRQLTLKLAGLLEELGHRVEHVDHPPAPASFVDDFVLYWGFLALAQVRSGRRTFGRTFDPTRLDELTLGLARHTGRNLHRLPLAIMRLRMLRRRSVRFFGTYDVLLTPTVAEATPQVGYLAPTDYQTVLDRLSSWVVFTPVQNVTGVPAISLPLAQSADGMPVGMMLSADTGREALLLELAYELEEARPWARIHAPNIAE.

Catalysis depends on charge relay system residues Lys82 and Ser157. Catalysis depends on Ser181, which acts as the Acyl-ester intermediate.

The protein belongs to the amidase family.

It catalyses the reaction a monocarboxylic acid amide + H2O = a monocarboxylate + NH4(+). This chain is Putative amidase AmiC (amiC), found in Mycobacterium bovis (strain ATCC BAA-935 / AF2122/97).